A 726-amino-acid polypeptide reads, in one-letter code: Peroxisomal fatty acid beta-oxidation multifunctional protein (726 aa).

This sequence in the N-terminal section; belongs to the enoyl-CoA hydratase/isomerase family. The protein in the central section; belongs to the 3-hydroxyacyl-CoA dehydrogenase family. In terms of assembly, monomer.

It is found in the peroxisome. The protein resides in the cytoplasm. It localises to the cytoskeleton. It carries out the reaction a (3S)-3-hydroxyacyl-CoA = a (2E)-enoyl-CoA + H2O. It catalyses the reaction a 4-saturated-(3S)-3-hydroxyacyl-CoA = a (3E)-enoyl-CoA + H2O. The enzyme catalyses a (3Z)-enoyl-CoA = a 4-saturated (2E)-enoyl-CoA. The catalysed reaction is a (3E)-enoyl-CoA = a 4-saturated (2E)-enoyl-CoA. It carries out the reaction (3S)-3-hydroxybutanoyl-CoA = (3R)-3-hydroxybutanoyl-CoA. It catalyses the reaction a (3S)-3-hydroxyacyl-CoA + NAD(+) = a 3-oxoacyl-CoA + NADH + H(+). Its pathway is lipid metabolism; fatty acid beta-oxidation. Functionally, multifunctional enzyme involved in fatty acid beta-oxidation. Also binds to RNA and microtubules. Possible role in subcellular mRNA localization and RNA-cytoskeleton interactions. The protein is Peroxisomal fatty acid beta-oxidation multifunctional protein (MFP) of Oryza sativa subsp. japonica (Rice).